The sequence spans 614 residues: UvrABC system protein C (614 aa).

Residues 19 to 97 (SLPGCYLWKN…IKKYNPKFNV (79 aa)) enclose the GIY-YIG domain. The UVR domain maps to 208–243 (ERLVADLKKAMMDASSKMEYERAGFLKQRIEKINQL).

This sequence belongs to the UvrC family. As to quaternary structure, interacts with UvrB in an incision complex.

The protein resides in the cytoplasm. Functionally, the UvrABC repair system catalyzes the recognition and processing of DNA lesions. UvrC both incises the 5' and 3' sides of the lesion. The N-terminal half is responsible for the 3' incision and the C-terminal half is responsible for the 5' incision. This Leptospira biflexa serovar Patoc (strain Patoc 1 / Ames) protein is UvrABC system protein C.